The primary structure comprises 205 residues: Octanoyltransferase (205 aa).

Residues 30-205 (ERTADEIWLL…QALRARLGYA (176 aa)) form the BPL/LPL catalytic domain. Substrate contacts are provided by residues 69–76 (RGGQVTYH), 136–138 (SLG), and 149–151 (GLA). Cysteine 167 acts as the Acyl-thioester intermediate in catalysis.

This sequence belongs to the LipB family.

It localises to the cytoplasm. It carries out the reaction octanoyl-[ACP] + L-lysyl-[protein] = N(6)-octanoyl-L-lysyl-[protein] + holo-[ACP] + H(+). The protein operates within protein modification; protein lipoylation via endogenous pathway; protein N(6)-(lipoyl)lysine from octanoyl-[acyl-carrier-protein]: step 1/2. Catalyzes the transfer of endogenously produced octanoic acid from octanoyl-acyl-carrier-protein onto the lipoyl domains of lipoate-dependent enzymes. Lipoyl-ACP can also act as a substrate although octanoyl-ACP is likely to be the physiological substrate. This chain is Octanoyltransferase, found in Ectopseudomonas mendocina (strain ymp) (Pseudomonas mendocina).